The primary structure comprises 837 residues: V-type proton ATPase 116 kDa subunit a 1 (837 aa).

The Cytoplasmic portion of the chain corresponds to 1-388; that stretch reads MGELFRSEEM…DAYGIGTYRE (388 aa). Thr-250 and Thr-360 each carry phosphothreonine. Phosphotyrosine is present on Tyr-364. A helical transmembrane segment spans residues 389 to 407; it reads INPAPYTIITFPFLFAVMF. Topologically, residues 408 to 409 are vacuolar; the sequence is GD. Residues 410 to 426 traverse the membrane as a helical segment; it reads FGHGILMTLFAVWMVLR. The Cytoplasmic segment spans residues 427–441; the sequence is ESRILSQKNENEMFS. Residues 442–471 traverse the membrane as a helical segment; that stretch reads TVFSGRYIILLMGVFSMYTGLIYNDCFSKS. At 472–534 the chain is on the vacuolar side; that stretch reads LNIFGSSWSV…ATNKLTFLNS (63 aa). Asn-488 carries N-linked (GalNAc...) asparagine glycosylation. Residues 535 to 554 traverse the membrane as a helical segment; sequence FKMKMSVILGIIHMLFGVSL. Over 555–572 the chain is Cytoplasmic; the sequence is SLFNHIYFKKPLNIYFGF. A helical transmembrane segment spans residues 573 to 593; the sequence is IPEIIFMTSLFGYLVILIFYK. Topologically, residues 594–638 are vacuolar; that stretch reads WTAYDAHTSENAPSLLIHFINMFLFSYPESGYSMLYSGQKGIQCF. The chain crosses the membrane as a helical span at residues 639–658; it reads LVVVALLCVPWMLLFKPLVL. The Cytoplasmic portion of the chain corresponds to 659–724; the sequence is RRQYLRRKHL…DTMVHQAIHT (66 aa). Residues 725-749 traverse the membrane as a helical segment; sequence IEYCLGCISNTASYLRLWALSLAHA. Over 750 to 770 the chain is Vacuolar; that stretch reads QLSEVLWTMVIHIGLSVKSLA. Residues 771-809 traverse the membrane as a helical segment; that stretch reads GGLVLFFFFTAFATLTVAILLIMEGLSAFLHALRLHWVE. Residues 810-837 lie on the Cytoplasmic side of the membrane; the sequence is FQNKFYSGTGFKFLPFSFEHIREGKFEE.

This sequence belongs to the V-ATPase 116 kDa subunit family. V-ATPase is a heteromultimeric enzyme made up of two complexes: the ATP-hydrolytic V1 complex and the proton translocation V0 complex. The V1 complex consists of three catalytic AB heterodimers that form a heterohexamer, three peripheral stalks each consisting of EG heterodimers, one central rotor including subunits D and F, and the regulatory subunits C and H. The proton translocation complex V0 consists of the proton transport subunit a, a ring of proteolipid subunits c9c'', rotary subunit d, subunits e and f, and the accessory subunits ATP6AP1/Ac45 and ATP6AP2/PRR. Interacts with SPAAR.

Its subcellular location is the cytoplasmic vesicle. The protein localises to the clathrin-coated vesicle membrane. It is found in the secretory vesicle. It localises to the synaptic vesicle membrane. The protein resides in the melanosome. Subunit of the V0 complex of vacuolar(H+)-ATPase (V-ATPase), a multisubunit enzyme composed of a peripheral complex (V1) that hydrolyzes ATP and a membrane integral complex (V0) that transports protons across cellular membranes. V-ATPase is responsible for the acidification of various organelles, such as lysosomes, endosomes, the trans-Golgi network, and secretory granules, including synaptic vesicles. In certain cell types, can be exported to the plasma membrane, where it is involved in the acidification of the extracellular environment. Required for assembly and activity of the vacuolar ATPase. Through its action on compartment acidification, plays an essential role in neuronal development in terms of integrity and connectivity of neurons. The chain is V-type proton ATPase 116 kDa subunit a 1 (ATP6V0A1) from Homo sapiens (Human).